Consider the following 160-residue polypeptide: Probable chemoreceptor glutamine deamidase CheD 2 (160 aa).

The protein belongs to the CheD family.

The enzyme catalyses L-glutaminyl-[protein] + H2O = L-glutamyl-[protein] + NH4(+). Functionally, probably deamidates glutamine residues to glutamate on methyl-accepting chemotaxis receptors (MCPs), playing an important role in chemotaxis. This chain is Probable chemoreceptor glutamine deamidase CheD 2, found in Geobacter sulfurreducens (strain ATCC 51573 / DSM 12127 / PCA).